Reading from the N-terminus, the 315-residue chain is ADP/ATP translocase 4 (315 aa).

The Mitochondrial intermembrane portion of the chain corresponds to 1 to 19 (MHREPAKKKAEKRLFDASS). Residues 18 to 110 (SSFGKDLLAG…FAFKDKYKQL (93 aa)) form a Solcar 1 repeat. Residues 20–49 (FGKDLLAGGVAAAVSKTAVAPIERVKLLLQ) traverse the membrane as a helical segment. Over 50-86 (VQASSKQISPEARYKGMVDCLVRIPREQGFFSFWRGN) the chain is Mitochondrial matrix. Residues 87–111 (LANVIRYFPTQALNFAFKDKYKQLF) form a helical membrane-spanning segment. Arg-92 and Lys-104 together coordinate ADP. Residues 112–121 (MSGVNKEKQF) lie on the Mitochondrial intermembrane side of the membrane. A helical membrane pass occupies residues 122–142 (WRWFLANLASGGAAGATSLCV). 2 Solcar repeats span residues 123 to 213 (RWFL…VKGL) and 220 to 307 (TPFL…IKEF). Over 143–190 (VYPLDFARTRLGVDIGKGPEERQFKGLGDCIMKIAKSDGIAGLYQGFG) the chain is Mitochondrial matrix. A helical transmembrane segment spans residues 191–211 (VSVQGIIVYRASYFGAYDTVK). Topologically, residues 212–222 (GLLPKPKKTPF) are mitochondrial intermembrane. The helical transmembrane segment at 223-243 (LVSFFIAQVVTTCSGILSYPF) threads the bilayer. Topologically, residues 244–283 (DTVRRRMMMQSGEAKRQYKGTLDCFVKIYQHEGISSFFRG) are mitochondrial matrix. Arg-247 serves as a coordination point for ADP. The segment at 247 to 252 (RRRMMM) is important for transport activity. Residues 247 to 252 (RRRMMM) carry the Nucleotide carrier signature motif motif. Residues 284 to 301 (AFSNVLRGTGGALVLVLY) traverse the membrane as a helical segment. At 302–315 (DKIKEFFHIDIGGR) the chain is on the mitochondrial intermembrane side.

The protein belongs to the mitochondrial carrier (TC 2.A.29) family. Monomer. As to expression, expressed in brain, liver, sperm and testis. In testis, expressed at higher level in spermatocytes, while it is expressed at lower level in spermatogonial cells. Expressed in erythrocytes (at protein level).

The protein resides in the mitochondrion inner membrane. Its subcellular location is the membrane. It localises to the cell projection. It is found in the cilium. The protein localises to the flagellum membrane. The catalysed reaction is ADP(in) + ATP(out) = ADP(out) + ATP(in). The enzyme catalyses dATP(out) + ADP(in) = dATP(in) + ADP(out). It carries out the reaction dADP(in) + ADP(out) = dADP(out) + ADP(in). It catalyses the reaction H(+)(in) = H(+)(out). The matrix-open state (m-state) is inhibited by the membrane-permeable bongkrekic acid (BKA). The cytoplasmic-open state (c-state) is inhibited by the membrane-impermeable toxic inhibitor carboxyatractyloside (CATR). Proton transporter activity is inhibited by ADP:ATP antiporter activity. Functionally, ADP:ATP antiporter that mediates import of ADP into the mitochondrial matrix for ATP synthesis, and export of ATP out to fuel the cell. Cycles between the cytoplasmic-open state (c-state) and the matrix-open state (m-state): operates by the alternating access mechanism with a single substrate-binding site intermittently exposed to either the cytosolic (c-state) or matrix (m-state) side of the inner mitochondrial membrane. Specifically required during spermatogenesis, probably to mediate ADP:ATP exchange in spermatocytes. Large ATP supplies from mitochondria may be critical for normal progression of spermatogenesis during early stages of meiotic prophase I, including DNA double-strand break repair and chromosomal synapsis. In addition to its ADP:ATP antiporter activity, also involved in mitochondrial uncoupling and mitochondrial permeability transition pore (mPTP) activity. Plays a role in mitochondrial uncoupling by acting as a proton transporter: proton transport uncouples the proton flows via the electron transport chain and ATP synthase to reduce the efficiency of ATP production and cause mitochondrial thermogenesis. Proton transporter activity is inhibited by ADP:ATP antiporter activity, suggesting that SLC25A31/ANT4 acts as a master regulator of mitochondrial energy output by maintaining a delicate balance between ATP production (ADP:ATP antiporter activity) and thermogenesis (proton transporter activity). Proton transporter activity requires free fatty acids as cofactor, but does not transport it. Among nucleotides, may also exchange ADP for dATP and dADP. Also plays a key role in mPTP opening, a non-specific pore that enables free passage of the mitochondrial membranes to solutes of up to 1.5 kDa, and which contributes to cell death. It is however unclear if SLC25A31/ANT4 constitutes a pore-forming component of mPTP or regulates it. This chain is ADP/ATP translocase 4, found in Homo sapiens (Human).